A 497-amino-acid chain; its full sequence is Acetyl-coenzyme A carboxylase carboxyl transferase subunit beta, chloroplastic (497 aa).

The disordered stretch occupies residues glycine 30–isoleucine 50. Residues aspartate 40 to isoleucine 50 show a composition bias toward basic and acidic residues. Positions valine 230–lysine 497 constitute a CoA carboxyltransferase N-terminal domain. Zn(2+) contacts are provided by cysteine 232, cysteine 237, cysteine 253, and cysteine 256. The C4-type zinc finger occupies cysteine 232–cysteine 256.

The protein belongs to the AccD/PCCB family. Acetyl-CoA carboxylase is a heterohexamer composed of biotin carboxyl carrier protein, biotin carboxylase and 2 subunits each of ACCase subunit alpha and ACCase plastid-coded subunit beta (accD). The cofactor is Zn(2+).

The protein localises to the plastid. Its subcellular location is the chloroplast stroma. It carries out the reaction N(6)-carboxybiotinyl-L-lysyl-[protein] + acetyl-CoA = N(6)-biotinyl-L-lysyl-[protein] + malonyl-CoA. It functions in the pathway lipid metabolism; malonyl-CoA biosynthesis; malonyl-CoA from acetyl-CoA: step 1/1. Component of the acetyl coenzyme A carboxylase (ACC) complex. Biotin carboxylase (BC) catalyzes the carboxylation of biotin on its carrier protein (BCCP) and then the CO(2) group is transferred by the transcarboxylase to acetyl-CoA to form malonyl-CoA. The chain is Acetyl-coenzyme A carboxylase carboxyl transferase subunit beta, chloroplastic from Gossypium hirsutum (Upland cotton).